A 102-amino-acid chain; its full sequence is Small ribosomal subunit protein uS10 (102 aa).

It belongs to the universal ribosomal protein uS10 family. Part of the 30S ribosomal subunit.

Functionally, involved in the binding of tRNA to the ribosomes. The polypeptide is Small ribosomal subunit protein uS10 (Thermotoga maritima (strain ATCC 43589 / DSM 3109 / JCM 10099 / NBRC 100826 / MSB8)).